Here is a 148-residue protein sequence, read N- to C-terminus: Large ribosomal subunit protein uL15 (148 aa).

The disordered stretch occupies residues M1–V61.

The protein belongs to the universal ribosomal protein uL15 family. Part of the 50S ribosomal subunit.

Binds to the 23S rRNA. This is Large ribosomal subunit protein uL15 from Thermodesulfovibrio yellowstonii (strain ATCC 51303 / DSM 11347 / YP87).